A 259-amino-acid chain; its full sequence is Hydroxyacylglutathione hydrolase (259 aa).

Zn(2+) contacts are provided by histidine 56, histidine 58, aspartate 60, histidine 61, histidine 112, aspartate 133, and histidine 171.

The protein belongs to the metallo-beta-lactamase superfamily. Glyoxalase II family. In terms of assembly, monomer. Zn(2+) is required as a cofactor.

The catalysed reaction is an S-(2-hydroxyacyl)glutathione + H2O = a 2-hydroxy carboxylate + glutathione + H(+). It functions in the pathway secondary metabolite metabolism; methylglyoxal degradation; (R)-lactate from methylglyoxal: step 2/2. Thiolesterase that catalyzes the hydrolysis of S-D-lactoyl-glutathione to form glutathione and D-lactic acid. The sequence is that of Hydroxyacylglutathione hydrolase from Pseudomonas putida (strain ATCC 47054 / DSM 6125 / CFBP 8728 / NCIMB 11950 / KT2440).